A 113-amino-acid chain; its full sequence is Large ribosomal subunit protein bL19 (113 aa).

Belongs to the bacterial ribosomal protein bL19 family.

This protein is located at the 30S-50S ribosomal subunit interface and may play a role in the structure and function of the aminoacyl-tRNA binding site. This chain is Large ribosomal subunit protein bL19, found in Mycobacterium marinum (strain ATCC BAA-535 / M).